Consider the following 435-residue polypeptide: Cytidine monophosphate-N-acetylneuraminic acid hydroxylase (435 aa).

The protein belongs to the CMP-Neu5Ac hydroxylase family. Requires [2Fe-2S] cluster as cofactor.

The protein resides in the cytoplasm. It catalyses the reaction CMP-N-acetyl-beta-neuraminate + 2 Fe(II)-[cytochrome b5] + O2 + 2 H(+) = CMP-N-glycoloyl-beta-neuraminate + 2 Fe(III)-[cytochrome b5] + H2O. It participates in amino-sugar metabolism; N-acetylneuraminate metabolism. Functionally, sialic acids are components of carbohydrate chains of glycoconjugates and are involved in cell-cell recognition and cell-pathogen interactions. Catalyzes the conversion of CMP-N-acetylneuraminic acid (CMP-Neu5Ac) into its hydroxylated derivative CMP-N-glycolylneuraminic acid (CMP-Neu5Gc), a sialic acid abundantly expressed at the surface of many cells. In Sus scrofa (Pig), this protein is Cytidine monophosphate-N-acetylneuraminic acid hydroxylase.